Here is a 478-residue protein sequence, read N- to C-terminus: Allene oxide synthase 2 (478 aa).

Heme b is bound by residues Lys-88, His-119, and Lys-123. Asn-278 serves as a coordination point for (13S)-hydroperoxy-(9Z,11E,15Z)-octadecatrienoate. Residues Lys-427 and Cys-429 each coordinate heme b.

Belongs to the cytochrome P450 family. Requires heme b as cofactor. Weakly expressed in roots, shoots, leaves and flowers.

It carries out the reaction (13S)-hydroperoxy-(9Z,11E,15Z)-octadecatrienoate = (9Z,13S,15Z)-12,13-epoxyoctadeca-9,11,15-trienoate + H2O. It functions in the pathway lipid metabolism; oxylipin biosynthesis. In terms of biological role, involved in the biosynthesis of jasmonic acid, a growth regulator that is implicated also as a signaling molecule in plant defense. Converts 13-hydroperoxylinolenic acid to 12,13-epoxylinolenic acid. The chain is Allene oxide synthase 2 (CYP74A2) from Oryza sativa subsp. japonica (Rice).